A 326-amino-acid chain; its full sequence is Eukaryotic translation initiation factor 3 subunit I (326 aa).

5 WD repeats span residues 8–47, 50–89, 145–184, 188–227, and 285–326; these read GHER…RLGT, GHQG…VIAS, MTES…KVVD, DHSA…CLKT, and GHFG…NIFE.

This sequence belongs to the eIF-3 subunit I family. As to quaternary structure, component of the eukaryotic translation initiation factor 3 (eIF-3) complex. The eIF-3 complex interacts with pix.

The protein resides in the cytoplasm. In terms of biological role, component of the eukaryotic translation initiation factor 3 (eIF-3) complex, which is involved in protein synthesis of a specialized repertoire of mRNAs and, together with other initiation factors, stimulates binding of mRNA and methionyl-tRNAi to the 40S ribosome. The eIF-3 complex specifically targets and initiates translation of a subset of mRNAs involved in cell proliferation. This Drosophila simulans (Fruit fly) protein is Eukaryotic translation initiation factor 3 subunit I.